Here is an 88-residue protein sequence, read N- to C-terminus: Small ribosomal subunit protein bS20 (88 aa).

Positions M1 to R23 are enriched in basic and acidic residues. Disordered regions lie at residues M1–V28 and P69–K88. Basic residues predominate over residues N71–K81.

It belongs to the bacterial ribosomal protein bS20 family.

Binds directly to 16S ribosomal RNA. This Dehalococcoides mccartyi (strain ATCC BAA-2266 / KCTC 15142 / 195) (Dehalococcoides ethenogenes (strain 195)) protein is Small ribosomal subunit protein bS20.